The sequence spans 263 residues: CRISPR-associated protein Cas5 2 (263 aa).

It belongs to the CRISPR-associated protein Cas5 family. Subtype I-A/Apern subfamily. In terms of assembly, part of the aCascade ribonucleoprotein complex, minimally composed of Csa2 and Cas5a, which binds crRNA. Other possible components of aCascade in strain P1 are Cas6b (SSO1437) and Csa5 (SSO1443), while SSO1399, Cas5b (SSO1400) and SSO1401 have sometimes been seen weakly associated. Csa2 is probably the major RNA-binding subunit. The Csa2-Cas5a-crRNA complex also binds target DNA homologous to crRNA, probably forming an R-loop. Purified aCascade forms a filament about 6 nm in width.

Functionally, CRISPR (clustered regularly interspaced short palindromic repeat) is an adaptive immune system that provides protection against mobile genetic elements (viruses, transposable elements and conjugative plasmids). CRISPR clusters contain spacers, sequences complementary to antecedent mobile elements, and target invading nucleic acids. CRISPR clusters are transcribed and processed into CRISPR RNA (crRNA). The chain is CRISPR-associated protein Cas5 2 (cas5b) from Saccharolobus solfataricus (strain ATCC 35092 / DSM 1617 / JCM 11322 / P2) (Sulfolobus solfataricus).